We begin with the raw amino-acid sequence, 301 residues long: ATP synthase gamma chain (301 aa).

This sequence belongs to the ATPase gamma chain family. As to quaternary structure, F-type ATPases have 2 components, CF(1) - the catalytic core - and CF(0) - the membrane proton channel. CF(1) has five subunits: alpha(3), beta(3), gamma(1), delta(1), epsilon(1). CF(0) has three main subunits: a, b and c.

The protein resides in the cell inner membrane. Functionally, produces ATP from ADP in the presence of a proton gradient across the membrane. The gamma chain is believed to be important in regulating ATPase activity and the flow of protons through the CF(0) complex. In Bordetella parapertussis (strain 12822 / ATCC BAA-587 / NCTC 13253), this protein is ATP synthase gamma chain.